Consider the following 140-residue polypeptide: MGLCGSKTQPMPSQTTTVATKARTKPINRDTVKSKQELRHKEKKDKKKKTQLKSTTVPVVQRKEGSKLTDTSDPSKNKVSPKEAARLAAEKRFQETNEKYNKGELGKKLAQERAKSHKTRLMEEAEKKHAERERENMIYD.

The segment covering 1–19 (MGLCGSKTQPMPSQTTTVA) has biased composition (polar residues). A disordered region spans residues 1-140 (MGLCGSKTQP…ERERENMIYD (140 aa)). Glycine 2 carries the N-myristoyl glycine lipid modification. Cysteine 4 carries S-palmitoyl cysteine lipidation. Over residues 27–40 (INRDTVKSKQELRH) the composition is skewed to basic and acidic residues. The span at 41–51 (KEKKDKKKKTQ) shows a compositional bias: basic residues. The span at 73 to 140 (DPSKNKVSPK…ERERENMIYD (68 aa)) shows a compositional bias: basic and acidic residues.

It to S.pombe new13. In terms of processing, myristoylated. The N-myristoylated protein is further palmitoylated by ERF2, PFA4 and slightly by PFA5, but not by PFA3.

The protein localises to the cytoplasm. It is found in the cytosol. This is an uncharacterized protein from Saccharomyces cerevisiae (strain ATCC 204508 / S288c) (Baker's yeast).